The primary structure comprises 310 residues: L-lactate dehydrogenase (310 aa).

NAD(+) contacts are provided by residues Val-11, Asp-32, Tyr-62, and 76-77; that span reads GV. Substrate is bound by residues Gln-79, Arg-85, and 117–120; that span reads NPVD. Residues 115 to 117 and Ser-140 contribute to the NAD(+) site; that span reads ATN. 145 to 148 is a substrate binding site; it reads DTAR. Beta-D-fructose 1,6-bisphosphate-binding residues include Arg-150 and His-165. His-172 acts as the Proton acceptor in catalysis. Phosphotyrosine is present on Tyr-218. Position 227 (Thr-227) interacts with substrate.

It belongs to the LDH/MDH superfamily. LDH family. As to quaternary structure, homotetramer.

Its subcellular location is the cytoplasm. The catalysed reaction is (S)-lactate + NAD(+) = pyruvate + NADH + H(+). It functions in the pathway fermentation; pyruvate fermentation to lactate; (S)-lactate from pyruvate: step 1/1. With respect to regulation, allosterically activated by fructose 1,6-bisphosphate (FBP). Catalyzes the conversion of lactate to pyruvate. The polypeptide is L-lactate dehydrogenase (Thermus thermophilus (strain ATCC BAA-163 / DSM 7039 / HB27)).